A 125-amino-acid polypeptide reads, in one-letter code: Putative oxygen-evolving enhancer protein 2-2 (125 aa).

Position 15 is a phosphoserine (Ser15).

The protein belongs to the PsbP family.

The polypeptide is Putative oxygen-evolving enhancer protein 2-2 (PSBP2) (Arabidopsis thaliana (Mouse-ear cress)).